The following is a 197-amino-acid chain: Na(+)-translocating NADH-quinone reductase subunit E (197 aa).

Transmembrane regions (helical) follow at residues 11 to 31, 35 to 55, 76 to 96, 108 to 128, 139 to 159, and 175 to 195; these read SVFIENMALSFFLGMCTFLAV, VSTAFGLGVAVIFVLGLSVPA, FLKFITFIGVIAALVQILEMF, LGIYLPLITVNCAIFGAVSFM, VVYGFGAGLGWMLAIVALAGI, and LGITFIAAGLMAMAFMSFSGI.

The protein belongs to the NqrDE/RnfAE family. Composed of six subunits; NqrA, NqrB, NqrC, NqrD, NqrE and NqrF.

It is found in the cell inner membrane. The catalysed reaction is a ubiquinone + n Na(+)(in) + NADH + H(+) = a ubiquinol + n Na(+)(out) + NAD(+). Its function is as follows. NQR complex catalyzes the reduction of ubiquinone-1 to ubiquinol by two successive reactions, coupled with the transport of Na(+) ions from the cytoplasm to the periplasm. NqrA to NqrE are probably involved in the second step, the conversion of ubisemiquinone to ubiquinol. The polypeptide is Na(+)-translocating NADH-quinone reductase subunit E (Neisseria gonorrhoeae (strain ATCC 700825 / FA 1090)).